Consider the following 187-residue polypeptide: Ribose 1,5-bisphosphate phosphokinase PhnN (187 aa).

ATP is bound at residue 9 to 16 (GPSGSGKD).

The protein belongs to the ribose 1,5-bisphosphokinase family.

It carries out the reaction alpha-D-ribose 1,5-bisphosphate + ATP = 5-phospho-alpha-D-ribose 1-diphosphate + ADP. It participates in metabolic intermediate biosynthesis; 5-phospho-alpha-D-ribose 1-diphosphate biosynthesis; 5-phospho-alpha-D-ribose 1-diphosphate from D-ribose 5-phosphate (route II): step 3/3. Functionally, catalyzes the phosphorylation of ribose 1,5-bisphosphate to 5-phospho-D-ribosyl alpha-1-diphosphate (PRPP). This Desulfomicrobium baculatum (strain DSM 4028 / VKM B-1378 / X) (Desulfovibrio baculatus) protein is Ribose 1,5-bisphosphate phosphokinase PhnN.